Here is a 253-residue protein sequence, read N- to C-terminus: Ubiquinone/menaquinone biosynthesis C-methyltransferase UbiE (253 aa).

Residues Thr-76, Asp-97, and 125 to 126 (NA) each bind S-adenosyl-L-methionine.

This sequence belongs to the class I-like SAM-binding methyltransferase superfamily. MenG/UbiE family.

The catalysed reaction is a 2-demethylmenaquinol + S-adenosyl-L-methionine = a menaquinol + S-adenosyl-L-homocysteine + H(+). It carries out the reaction a 2-methoxy-6-(all-trans-polyprenyl)benzene-1,4-diol + S-adenosyl-L-methionine = a 5-methoxy-2-methyl-3-(all-trans-polyprenyl)benzene-1,4-diol + S-adenosyl-L-homocysteine + H(+). It functions in the pathway quinol/quinone metabolism; menaquinone biosynthesis; menaquinol from 1,4-dihydroxy-2-naphthoate: step 2/2. It participates in cofactor biosynthesis; ubiquinone biosynthesis. Methyltransferase required for the conversion of demethylmenaquinol (DMKH2) to menaquinol (MKH2) and the conversion of 2-polyprenyl-6-methoxy-1,4-benzoquinol (DDMQH2) to 2-polyprenyl-3-methyl-6-methoxy-1,4-benzoquinol (DMQH2). The chain is Ubiquinone/menaquinone biosynthesis C-methyltransferase UbiE from Bradyrhizobium diazoefficiens (strain JCM 10833 / BCRC 13528 / IAM 13628 / NBRC 14792 / USDA 110).